We begin with the raw amino-acid sequence, 298 residues long: MAFPKMRLMYICLLVLGALCLYFSMYSLNPFKEQSFVYKKDVNFLKLPDTDCRQTPPFLVLLVTSSHKQLAERMAIRQTWGKERTVKGKQLKTFFLLGTTSSAAETKEVDQESRRHGDIIQKDFLDVYYNLTLKTMMGIEWVHRFCPQAAFVMKTDSDMFINVDYLTELLLKKNRTTRFFTGFLKLNEFPIRQPFSKWFVSKSEYPWDRYPPFCSGTGYVFSGDVASQVYNVSESVPYIKLEDVFVGLCLERLNIRLEELHSQPTFFPGGLRFSVCRFRRIVACHFIKPRTLLDYWQA.

The Cytoplasmic segment spans residues 1 to 7 (MAFPKMR). A helical; Signal-anchor for type II membrane protein membrane pass occupies residues 8–28 (LMYICLLVLGALCLYFSMYSL). Topologically, residues 29-298 (NPFKEQSFVY…PRTLLDYWQA (270 aa)) are lumenal. N-linked (GlcNAc...) asparagine glycosylation is found at asparagine 130, asparagine 174, and asparagine 231.

It belongs to the glycosyltransferase 31 family.

It is found in the golgi apparatus membrane. It catalyses the reaction a globoside Gb4Cer (d18:1(4E)) + UDP-alpha-D-galactose = a globoside GalGb4Cer (d18:1(4E)) + UDP + H(+). It participates in protein modification; protein glycosylation. Functionally, catalyzes the transfer of Gal to GlcNAc-based acceptors with a preference for the core3 O-linked glycan GlcNAc(beta1,3)GalNAc structure. Can use glycolipid LC3Cer as an efficient acceptor. This Gorilla gorilla gorilla (Western lowland gorilla) protein is Beta-1,3-galactosyltransferase 5 (B3GALT5).